Reading from the N-terminus, the 203-residue chain is tRNA (pseudouridine(54)-N(1))-methyltransferase (203 aa).

Leucine 135 and glycine 156 together coordinate S-adenosyl-L-methionine.

This sequence belongs to the methyltransferase superfamily. TrmY family. Homodimer.

The protein resides in the cytoplasm. It catalyses the reaction pseudouridine(54) in tRNA + S-adenosyl-L-methionine = N(1)-methylpseudouridine(54) in tRNA + S-adenosyl-L-homocysteine + H(+). Its function is as follows. Specifically catalyzes the N1-methylation of pseudouridine at position 54 (Psi54) in tRNAs. The chain is tRNA (pseudouridine(54)-N(1))-methyltransferase from Thermococcus onnurineus (strain NA1).